The sequence spans 234 residues: Large ribosomal subunit protein uL1 (234 aa).

This sequence belongs to the universal ribosomal protein uL1 family. As to quaternary structure, part of the 50S ribosomal subunit.

Its function is as follows. Binds directly to 23S rRNA. The L1 stalk is quite mobile in the ribosome, and is involved in E site tRNA release. Functionally, protein L1 is also a translational repressor protein, it controls the translation of the L11 operon by binding to its mRNA. This chain is Large ribosomal subunit protein uL1, found in Salmonella arizonae (strain ATCC BAA-731 / CDC346-86 / RSK2980).